The chain runs to 265 residues: Eukaryotic translation initiation factor 3 subunit J (265 aa).

2 stretches are compositionally biased toward acidic residues: residues 1 to 12 (MAPERWDDEEDS) and 26 to 44 (DEEE…DSEV). 2 disordered regions span residues 1 to 113 (MAPE…DADL) and 212 to 265 (TMSN…DDFM). Basic and acidic residues-rich tracts occupy residues 45 to 65 (EREK…EAAA) and 73 to 86 (RIQE…KKAE). A coiled-coil region spans residues 61–95 (AEAAAKKKSKSQRIQEHKEERKKKAEEEDSDSEEE). Acidic residues predominate over residues 87-97 (EEDSDSEEEDD). Residues 216–228 (EKMREERAADKGS) show a composition bias toward basic and acidic residues. Residues 251–265 (DYDNGDDGLGDDDFM) are compositionally biased toward acidic residues.

Belongs to the eIF-3 subunit J family. Component of the eukaryotic translation initiation factor 3 (eIF-3) complex.

Its subcellular location is the cytoplasm. Functionally, component of the eukaryotic translation initiation factor 3 (eIF-3) complex, which is involved in protein synthesis of a specialized repertoire of mRNAs and, together with other initiation factors, stimulates binding of mRNA and methionyl-tRNAi to the 40S ribosome. The eIF-3 complex specifically targets and initiates translation of a subset of mRNAs involved in cell proliferation. In Aspergillus oryzae (strain ATCC 42149 / RIB 40) (Yellow koji mold), this protein is Eukaryotic translation initiation factor 3 subunit J (hcr1).